The primary structure comprises 883 residues: Coatomer subunit gamma (883 aa).

Residues 1–25 (MNYFSLTSHKKHRGHPSAGPSNAYQ) form a disordered region. HEAT repeat units lie at residues 69–106 (REAT…IAED), 292–329 (RMLS…THPA), 331–364 (VTTC…GAES), 365–401 (SVER…KYPR), 404–439 (TVLM…ENAD), and 476–513 (ATPS…SCPA).

The protein belongs to the COPG family. As to quaternary structure, oligomeric complex that consists of at least the alpha, beta, beta', gamma, delta, epsilon and zeta subunits. As to expression, expressed in ovary, testis, testis tip, young spermatocytes, germ cells and follicle cells. Up-regulated expression within centrally to posteriorly located germarial cysts and in migrating follicle cells. Widespread expression in imaginal disks including eye-antennal disk, wing disk, third leg and haltere disk.

The protein resides in the cytoplasm. It is found in the golgi apparatus membrane. The protein localises to the cytoplasmic vesicle. It localises to the COPI-coated vesicle membrane. Its subcellular location is the endoplasmic reticulum. Functionally, the coatomer is a cytosolic protein complex that binds to dilysine motifs and reversibly associates with Golgi non-clathrin-coated vesicles, which further mediate biosynthetic protein transport from the ER, via the Golgi up to the trans Golgi network. Coatomer complex is required for budding from Golgi membranes, and is essential for the retrograde Golgi-to-ER transport of dilysine-tagged proteins. Required for limiting lipid storage in lipid droplets. Involved in the expansion of luminal extracellular matrices and apical membrane during tubulogenesis. Required in the tracheal epithelium for luminal protein secretion and diametric tube growth. In salivary glands, required for deposition of O-glycans and luminal extracellular matrix assembly. Required for epidermal morphogenesis and cuticle development. This chain is Coatomer subunit gamma, found in Drosophila melanogaster (Fruit fly).